A 640-amino-acid chain; its full sequence is Chaperone protein HtpG (640 aa).

Residues 1–343 (MQTAENIEHL…SSDLPLNVSR (343 aa)) are a; substrate-binding. Positions 344 to 564 (EILQESKDID…THDVSGNLGR (221 aa)) are b. A c region spans residues 565 to 640 (LLKSAGQKVP…LLLQNILSGK (76 aa)).

Belongs to the heat shock protein 90 family. As to quaternary structure, homodimer.

The protein localises to the cytoplasm. Its function is as follows. Molecular chaperone. Has ATPase activity. This Nitrosomonas europaea (strain ATCC 19718 / CIP 103999 / KCTC 2705 / NBRC 14298) protein is Chaperone protein HtpG.